The primary structure comprises 161 residues: Ribosome maturation factor RimP (161 aa).

This sequence belongs to the RimP family.

Its subcellular location is the cytoplasm. Its function is as follows. Required for maturation of 30S ribosomal subunits. The chain is Ribosome maturation factor RimP from Rickettsia rickettsii (strain Iowa).